We begin with the raw amino-acid sequence, 516 residues long: Na(+)/H(+) antiporter NhaB (516 aa).

Helical transmembrane passes span 23 to 43 (LALI…PFVA), 61 to 80 (CYPL…IGMT), 97 to 117 (LLLM…LFVF), 120 to 140 (LLLG…AAAF), 144 to 164 (FLDA…FYGI), 202 to 222 (LMMH…VGEP), 238 to 258 (FFLR…LTCL), 303 to 323 (ALIG…VGLI), 348 to 368 (TEAL…AVII), 391 to 411 (LFYL…VGTV), 447 to 467 (ATPN…APLI), and 475 to 495 (VWMA…CVEF).

This sequence belongs to the NhaB Na(+)/H(+) (TC 2.A.34) antiporter family.

Its subcellular location is the cell inner membrane. The enzyme catalyses 2 Na(+)(in) + 3 H(+)(out) = 2 Na(+)(out) + 3 H(+)(in). Na(+)/H(+) antiporter that extrudes sodium in exchange for external protons. This is Na(+)/H(+) antiporter NhaB from Klebsiella pneumoniae subsp. pneumoniae (strain ATCC 700721 / MGH 78578).